The following is a 399-amino-acid chain: Maltose excess protein 1-like, chloroplastic (399 aa).

The transit peptide at methionine 1–valine 67 directs the protein to the chloroplast. Helical transmembrane passes span phenylalanine 93 to alanine 113, alanine 123 to leucine 143, alanine 154 to methionine 174, leucine 180 to phenylalanine 202, isoleucine 217 to isoleucine 237, proline 238 to alanine 258, isoleucine 268 to valine 288, alanine 306 to isoleucine 326, and phenylalanine 361 to isoleucine 381.

It localises to the plastid. The protein localises to the chloroplast inner membrane. In terms of biological role, probable maltose transporter. Essential for the conversion of starch to sucrose in leaves at night, probably via the export of maltose from the chloroplast. This Oryza sativa subsp. japonica (Rice) protein is Maltose excess protein 1-like, chloroplastic.